A 449-amino-acid polypeptide reads, in one-letter code: Glutamate--tRNA ligase 2 (449 aa).

The short motif at 11–21 is the 'HIGH' region element; that stretch reads PSPTGFLHIGN. The 'KMSKS' region signature appears at 242–246; it reads GLSKR. Lys-245 contributes to the ATP binding site.

This sequence belongs to the class-I aminoacyl-tRNA synthetase family. Glutamate--tRNA ligase type 1 subfamily. As to quaternary structure, monomer.

The protein localises to the cytoplasm. The catalysed reaction is tRNA(Glu) + L-glutamate + ATP = L-glutamyl-tRNA(Glu) + AMP + diphosphate. In terms of biological role, catalyzes the attachment of glutamate to tRNA(Glu) in a two-step reaction: glutamate is first activated by ATP to form Glu-AMP and then transferred to the acceptor end of tRNA(Glu). This Methylorubrum populi (strain ATCC BAA-705 / NCIMB 13946 / BJ001) (Methylobacterium populi) protein is Glutamate--tRNA ligase 2.